The chain runs to 322 residues: Methionyl-tRNA formyltransferase (322 aa).

Residue 115-118 participates in (6S)-5,6,7,8-tetrahydrofolate binding; sequence SLLP.

This sequence belongs to the Fmt family.

The enzyme catalyses L-methionyl-tRNA(fMet) + (6R)-10-formyltetrahydrofolate = N-formyl-L-methionyl-tRNA(fMet) + (6S)-5,6,7,8-tetrahydrofolate + H(+). Functionally, attaches a formyl group to the free amino group of methionyl-tRNA(fMet). The formyl group appears to play a dual role in the initiator identity of N-formylmethionyl-tRNA by promoting its recognition by IF2 and preventing the misappropriation of this tRNA by the elongation apparatus. This is Methionyl-tRNA formyltransferase from Treponema denticola (strain ATCC 35405 / DSM 14222 / CIP 103919 / JCM 8153 / KCTC 15104).